A 548-amino-acid chain; its full sequence is Chaperonin GroEL 1 (548 aa).

Residues 30–33 (TLGP), lysine 51, 87–91 (DGTTT), glycine 415, 479–481 (NAA), and aspartate 495 contribute to the ATP site.

It belongs to the chaperonin (HSP60) family. As to quaternary structure, forms a cylinder of 14 subunits composed of two heptameric rings stacked back-to-back. Interacts with the co-chaperonin GroES.

It localises to the cytoplasm. The catalysed reaction is ATP + H2O + a folded polypeptide = ADP + phosphate + an unfolded polypeptide.. Its function is as follows. Together with its co-chaperonin GroES, plays an essential role in assisting protein folding. The GroEL-GroES system forms a nano-cage that allows encapsulation of the non-native substrate proteins and provides a physical environment optimized to promote and accelerate protein folding. This Anaeromyxobacter dehalogenans (strain 2CP-C) protein is Chaperonin GroEL 1.